The chain runs to 261 residues: Complex I assembly factor TIMMDC1, mitochondrial (261 aa).

The next 3 helical transmembrane spans lie at 67 to 87, 131 to 151, and 183 to 203; these read LNSV…YGGV, WGWR…CMSV, and AGGI…LLLM.

This sequence belongs to the Tim17/Tim22/Tim23 family. Associates with complex I assembly intermediates during its biogenesis in a NdufAF3 and NdufAF4 dependent manner.

The protein resides in the membrane. In terms of biological role, chaperone protein involved in the assembly of the mitochondrial NADH:ubiquinone oxidoreductase complex (complex I). Essential for viability. The polypeptide is Complex I assembly factor TIMMDC1, mitochondrial (Drosophila melanogaster (Fruit fly)).